A 297-amino-acid chain; its full sequence is 4-hydroxy-tetrahydrodipicolinate synthase (297 aa).

Residue Thr45 coordinates pyruvate. Tyr133 functions as the Proton donor/acceptor in the catalytic mechanism. The active-site Schiff-base intermediate with substrate is Lys161. Pyruvate is bound at residue Ile203.

This sequence belongs to the DapA family. As to quaternary structure, homotetramer; dimer of dimers.

The protein localises to the cytoplasm. It catalyses the reaction L-aspartate 4-semialdehyde + pyruvate = (2S,4S)-4-hydroxy-2,3,4,5-tetrahydrodipicolinate + H2O + H(+). It participates in amino-acid biosynthesis; L-lysine biosynthesis via DAP pathway; (S)-tetrahydrodipicolinate from L-aspartate: step 3/4. Functionally, catalyzes the condensation of (S)-aspartate-beta-semialdehyde [(S)-ASA] and pyruvate to 4-hydroxy-tetrahydrodipicolinate (HTPA). The chain is 4-hydroxy-tetrahydrodipicolinate synthase from Buchnera aphidicola subsp. Cinara cedri (strain Cc).